The primary structure comprises 522 residues: MSHPSTVTSEPSNLLDFVPKLGNFVLNSSLHGNNSNGYSSFSSNSVHFGGLATQNRYKFVNSLSFSKEGSNLKRILSDFNRVIRLHCDRIPLGFSSIGLNSGESNGVSDNGHGVLEDVRVPVNAVEPESPKRVLILMSDTGGGHRASAEAIKAAFNEEFGDDYQVFVTDLWSEHTPWPFNQLPRSYNFLVKHGPLWKMMYYGTSPRVIHQSNFAATSVFIAREVARGLMKYQPDIIISVHPLMQHVPLRILRGRGLLEKIVFTTVVTDLSTCHPTWFHKLVTRCYCPSNEVAKRATKAGLQPSQIKVYGLPVRPSFVRSVRPKNELRKELGMDEHLPAVLLMGGGEGMGPIEATARALGNALYDANLGEPTGQLLVICGRNKKLAGKLSSIDWKIPVQVKGFVTKIEECMGACDCIITKAGPGTIAEAMIRGLPIILNDYIAGQEAGNVPYVIENGIGKYLKSPKEIAKTVSQWFGPKANELQIMSQNALKHARPDAVFKIVHDLDELVRQKIFVRQYSCAA.

Residues 1–98 (MSHPSTVTSE…RIPLGFSSIG (98 aa)) constitute a chloroplast transit peptide.

It belongs to the glycosyltransferase 28 family. In terms of assembly, homodimer. Zn(2+) serves as cofactor.

It localises to the plastid. The protein resides in the chloroplast inner membrane. It catalyses the reaction a 1,2-diacyl-sn-glycerol + UDP-alpha-D-galactose = a 1,2-diacyl-3-O-(beta-D-galactosyl)-sn-glycerol + UDP + H(+). Inhibited by ortho-phenanthroline and UDP (competitive inhibitor relatively to UDP-Gal only) and inactivated by citraconic anhydride, tert-butoxycarbonyl-L-methionine hydrosuccinimidyl ester (SLR) and N-ethylmaleimide (NEM). Functionally, involved in the synthesis of the major structural component of photosynthetic membranes. The 1,2-diacylglycerol substrate preference is 18:2/18:2 &gt; 18:0/18:1 &gt; 18:1/18:1 &gt; 18:1/16:0 &gt; 16:0/18:2 &gt; 18:3/18:3 &gt; 16:0/18:1 &gt; 16:0/16:0 &gt; 18:0/18:0. The chain is Monogalactosyldiacylglycerol synthase, chloroplastic (MGD A) from Spinacia oleracea (Spinach).